We begin with the raw amino-acid sequence, 306 residues long: MPIKLPDELPATEILAQENIFVMKDSRAFTQDIRPLRIVILNLMPVKETTETQLLRLLGNTPLQVEIVLLHMSSHTSKNTSEEHLSLFYKTFEEIRDQRFDGMIITGAPVEQLEFTDVTYWQELTEILDWKMENVTSTLHICWGAQAGLYHHFGVQKHPLPEKMFGIFPHTLNKQNVKLFRGFDNYFHIPHSRHTENRREDIEQVPELEILSESDEAGVYIVATRDGRQIFVTGHSEYDPTTLQDEYQRDVNKGLDIAVPRNYYPKDDPSREPIVTWRAHANLMFSNWLNYYVYQETPYDLNNDKR.

The active-site Acyl-thioester intermediate is the C142. Residues K163 and S192 each contribute to the substrate site. The active-site Proton acceptor is the H235. E237 is an active-site residue. R249 lines the substrate pocket.

This sequence belongs to the MetA family.

Its subcellular location is the cytoplasm. The catalysed reaction is L-homoserine + acetyl-CoA = O-acetyl-L-homoserine + CoA. It participates in amino-acid biosynthesis; L-methionine biosynthesis via de novo pathway; O-acetyl-L-homoserine from L-homoserine: step 1/1. In terms of biological role, transfers an acetyl group from acetyl-CoA to L-homoserine, forming acetyl-L-homoserine. The protein is Homoserine O-acetyltransferase of Brevibacillus brevis (strain 47 / JCM 6285 / NBRC 100599).